The chain runs to 61 residues: Small ribosomal subunit protein uS14 (61 aa).

Zn(2+) contacts are provided by C24, C27, C40, and C43.

This sequence belongs to the universal ribosomal protein uS14 family. Zinc-binding uS14 subfamily. Part of the 30S ribosomal subunit. Contacts proteins S3 and S10. Zn(2+) is required as a cofactor.

Its function is as follows. Binds 16S rRNA, required for the assembly of 30S particles and may also be responsible for determining the conformation of the 16S rRNA at the A site. This is Small ribosomal subunit protein uS14 from Rhodococcus erythropolis (strain PR4 / NBRC 100887).